The following is a 711-amino-acid chain: Triacylglycerol hydrolase DDHD2 (711 aa).

Positions 1 to 24 (MSSVQSQQEQLSQSDPSPSPNSCS) are disordered. In terms of domain architecture, WWE spans 30-112 (DMDAGSLYEP…WDELASEVRR (83 aa)). Residue Ser351 is the Nucleophile of the active site. In terms of domain architecture, SAM spans 385–448 (GDTPTLEEDL…NYFSTRKNSM (64 aa)). Ser447 carries the phosphoserine modification. 2 disordered regions span residues 449 to 470 (GIKR…SEFC) and 609 to 638 (LQAS…EETS). In terms of domain architecture, DDHD spans 495–700 (LIYKPEIFFA…VLLVLKEIYQ (206 aa)). Acidic residues predominate over residues 614-624 (TPEETEAEPES).

It belongs to the PA-PLA1 family. In terms of assembly, forms homooligomers and, to a much smaller extent, heterooligomers with DDHD1. Widely expressed (at protein level).

Its subcellular location is the cytoplasm. It is found in the cytosol. The protein resides in the endoplasmic reticulum-Golgi intermediate compartment. The protein localises to the golgi apparatus. It localises to the cis-Golgi network. It carries out the reaction a triacylglycerol + H2O = a diacylglycerol + a fatty acid + H(+). The enzyme catalyses a diacylglycerol + H2O = a monoacylglycerol + a fatty acid + H(+). It catalyses the reaction a 1,3-diacylglycerol + H2O = a 1-acylglycerol + a fatty acid + H(+). The catalysed reaction is a 1-acylglycerol + H2O = glycerol + a fatty acid + H(+). It carries out the reaction 1,2,3-tri-(9Z-octadecenoyl)-glycerol + H2O = di-(9Z)-octadecenoylglycerol + (9Z)-octadecenoate + H(+). The enzyme catalyses di-(9Z)-octadecenoylglycerol + H2O = (9Z-octadecenoyl)-glycerol + (9Z)-octadecenoate + H(+). It catalyses the reaction 1,3-di-(9Z-octadecenoyl)-glycerol + H2O = 1-(9Z-octadecenoyl)-glycerol + (9Z)-octadecenoate + H(+). The catalysed reaction is trihexadecanoylglycerol + H2O = dihexadecanoylglycerol + hexadecanoate + H(+). It carries out the reaction 1,2-di-(9Z-octadecenoyl)-sn-glycero-3-phosphocholine + H2O = (9Z-octadecenoyl)-sn-glycero-3-phosphocholine + (9Z)-octadecenoate + H(+). The enzyme catalyses 1-(9Z-octadecenoyl)-glycerol + H2O = glycerol + (9Z)-octadecenoate + H(+). It catalyses the reaction 1,2-di-(9Z-octadecenoyl)-sn-glycero-3-phosphate + H2O = 2-(9Z-octadecenoyl)-sn-glycero-3-phosphate + (9Z)-octadecenoate + H(+). The catalysed reaction is 1-hexadecanoyl-2-(9Z-octadecenoyl)-sn-glycero-3-phosphate + H2O = 2-(9Z-octadecenoyl)-sn-glycero-3-phosphate + hexadecanoate + H(+). It carries out the reaction 1-hexadecanoyl-2-(9Z-octadecenoyl)-sn-glycero-3-phosphoethanolamine + H2O = 2-(9Z-octadecenoyl)-sn-glycero-3-phosphoethanolamine + hexadecanoate + H(+). The enzyme catalyses 1-hexadecanoyl-2-(9Z-octadecenoyl)-sn-glycero-3-phospho-L-serine + H2O = 2-(9Z-octadecenoyl)-sn-glycero-3-phospho-L-serine + hexadecanoate + H(+). It catalyses the reaction 1-hexadecanoyl-2-(9Z-octadecenoyl)-sn-glycero-3-phosphocholine + H2O = 2-(9Z-octadecenoyl)-sn-glycero-3-phosphocholine + hexadecanoate + H(+). Its function is as follows. Diacylglycerol (DAG) and triacylglycerol (TAG) lipase required for proper lipid homeostasis in the central nervous system. It cooperates with PNPLA2/ATGL in neuronal TAG catabolism and hydrolyzes sn-1,3 DAG downstream of PNPLA2/ATGL. In vitro, it also acts as a phospholipase that hydrolyzes preferentially phosphatidic acids, including 1,2-dioleoyl-sn-phosphatidic acid, phosphatidylcholine and phosphatidylethanolamine. Specifically binds to phosphatidylinositol 3-phosphate (PI(3)P), phosphatidylinositol 4-phosphate (PI(4)P), phosphatidylinositol 5-phosphate (PI(5)P) and possibly phosphatidylinositol 4,5-bisphosphate (PI(4,5)P2). May be involved in the maintenance of the endoplasmic reticulum and/or Golgi structures. May regulate the transport between Golgi apparatus and plasma membrane. The sequence is that of Triacylglycerol hydrolase DDHD2 from Homo sapiens (Human).